Here is a 60-residue protein sequence, read N- to C-terminus: Large ribosomal subunit protein bL32 (60 aa).

Basic residues predominate over residues 1-20 (MAVQKSRKSRSRRDMRRSHH). The interval 1 to 60 (MAVQKSRKSRSRRDMRRSHHHMEVAELSIDATTGEKHRRHHMTKDGFYRGRQLFKASQED) is disordered.

This sequence belongs to the bacterial ribosomal protein bL32 family.

The sequence is that of Large ribosomal subunit protein bL32 from Psychrobacter sp. (strain PRwf-1).